The chain runs to 398 residues: Nocardicin C N-oxygenase (398 aa).

A disordered region spans residues 63-90 (RARAAGREETPRVTPEAAPAGSMLSMDP). His93, Arg97, Arg289, His345, and Cys347 together coordinate heme.

This sequence belongs to the cytochrome P450 family. Heme is required as a cofactor.

It catalyses the reaction nocardicin C + 4 reduced [2Fe-2S]-[ferredoxin] + 2 O2 + 2 H(+) = nocardicin A + 4 oxidized [2Fe-2S]-[ferredoxin] + 3 H2O. The protein operates within antibiotic biosynthesis. Its function is as follows. Involved in the biosynthesis of the beta-lactam antibiotic nocardicin A. Catalyzes the conversion of nocardicin C to nocardicin A. Cannot use nocardicin G. The protein is Nocardicin C N-oxygenase of Nocardia uniformis subsp. tsuyamanensis.